The following is a 1363-amino-acid chain: Spike glycoprotein (1363 aa).

Residues 1-13 (MFLILLISLPMAL) form the signal peptide. Residues 14–1307 (AVIGDLKCTT…GTYEYYVKWP (1294 aa)) are Extracellular-facing. Residues 15-298 (VIGDLKCTTV…DFMSEIKCKT (284 aa)) enclose the BetaCoV S1-NTD domain. Intrachain disulfides connect Cys21–Cys165, Cys160–Cys193, Cys172–Cys252, Cys286–Cys296, and Cys331–Cys356. N-linked (GlcNAc...) asparagine; by host glycans are attached at residues Asn59 and Asn133. A glycan (N-linked (GlcNAc...) asparagine; by host) is linked at Asn198. In terms of domain architecture, BetaCoV S1-CTD spans 329–617 (PDCNIEAWLN…DVNSGTTCST (289 aa)). Asn359 carries N-linked (GlcNAc...) asparagine; by host glycosylation. 2 disulfides stabilise this stretch: Cys374–Cys427 and Cys386–Cys615. N-linked (GlcNAc...) asparagine; by host glycosylation is found at Asn437, Asn649, Asn676, Asn696, Asn714, Asn739, and Asn788. Fusion peptide regions lie at residues 914 to 935 (SAIE…VEAY) and 933 to 953 (EAYN…VQSY). N-linked (GlcNAc...) asparagine; by host glycosylation is present at Asn937. Cysteines 938 and 949 form a disulfide. The heptad repeat 1 stretch occupies residues 1014-1064 (QKLIANAFNNALDAIQEGFDATNSALVKIQAVVNANAEALNNLLQQLSNRF). Residues 1043–1087 (QAVVNANAEALNNLLQQLSNRFGAISSSLQEILSRLDALEAQAQI) adopt a coiled-coil conformation. N-linked (GlcNAc...) asparagine; by host glycosylation is found at Asn1194, Asn1224, Asn1234, Asn1253, Asn1267, and Asn1288. Residues 1258-1296 (APDLSLDYINVTFLDLQDEMNRLQEAIKVLNQSYINLKD) form a heptad repeat 2 region. Positions 1269–1297 (TFLDLQDEMNRLQEAIKVLNQSYINLKDI) form a coiled coil. A helical transmembrane segment spans residues 1308–1328 (WYVWLLIGLAGVAMLVLLFFI). Topologically, residues 1329 to 1363 (CCCTGCGTSCFKKCGGCCDDYTGHQELVIKTSHDD) are cytoplasmic. Positions 1359–1363 (TSHDD) match the KxHxx motif.

Belongs to the betacoronaviruses spike protein family. As to quaternary structure, homotrimer; each monomer consists of a S1 and a S2 subunit. The resulting peplomers protrude from the virus surface as spikes. Post-translationally, specific enzymatic cleavages in vivo yield mature proteins. The precursor is processed into S1 and S2 by host cell furin or another cellular protease to yield the mature S1 and S2 proteins. Additionally, a second cleavage leads to the release of a fusion peptide after viral attachment to host cell receptor. The cytoplasmic Cys-rich domain is palmitoylated. Spike glycoprotein is digested within host endosomes.

Its subcellular location is the virion membrane. It is found in the host endoplasmic reticulum-Golgi intermediate compartment membrane. It localises to the host cell membrane. Attaches the virion to the cell membrane by interacting with host receptor, initiating the infection. In terms of biological role, mediates fusion of the virion and cellular membranes by acting as a class I viral fusion protein. Under the current model, the protein has at least three conformational states: pre-fusion native state, pre-hairpin intermediate state, and post-fusion hairpin state. During viral and target cell membrane fusion, the coiled coil regions (heptad repeats) assume a trimer-of-hairpins structure, positioning the fusion peptide in close proximity to the C-terminal region of the ectodomain. The formation of this structure appears to drive apposition and subsequent fusion of viral and target cell membranes. Its function is as follows. Acts as a viral fusion peptide which is unmasked following S2 cleavage occurring upon virus endocytosis. This Bos taurus (Bovine) protein is Spike glycoprotein.